Consider the following 292-residue polypeptide: Phosphoenolpyruvate guanylyltransferase (292 aa).

3 residues coordinate phosphoenolpyruvate: Thr168, Gly184, and Ser187. Positions 243–292 (PLVAEDSGGSGGESGTSAESGLSVPPGIVGGTQRRIVSDASGPGRAKKYP) are disordered.

Belongs to the CofC family.

It carries out the reaction phosphoenolpyruvate + GTP + H(+) = enolpyruvoyl-2-diphospho-5'-guanosine + diphosphate. The protein operates within cofactor biosynthesis; coenzyme F420 biosynthesis. Its function is as follows. Guanylyltransferase that catalyzes the activation of phosphoenolpyruvate (PEP) as enolpyruvoyl-2-diphospho-5'-guanosine, via the condensation of PEP with GTP. It is involved in the biosynthesis of coenzyme F420, a hydride carrier cofactor. This chain is Phosphoenolpyruvate guanylyltransferase, found in Frankia casuarinae (strain DSM 45818 / CECT 9043 / HFP020203 / CcI3).